We begin with the raw amino-acid sequence, 289 residues long: MLSTMQTVGAILMLSIVFVAGTKRHACDSKYSEVTPTHTMCLTDNANAVAVTLTQEVKVQIVRMHNVIRATVNDAANMMKMEWDDRLAAVAQKWAMQCILGHDGFANHAEPDLPGYVGQNVGWSNYHMTFPDVVDLWAAEIEDYEYGVWNDNTGHYIQQIYAEASRIGCGQSACGEDRYFVCNYYKSTMGNTPYAQGSRCGQCPNSCWEELCDCTSGPDACCNGGSLNIDTCECQCPRLWSGADCQEKQCPDHDYEDMCDYPDVVNNPEYWCQFSNIRSDCPIRCGDCP.

The first 24 residues, 1-24 (MLSTMQTVGAILMLSIVFVAGTKR), serve as a signal peptide directing secretion. Glu33 bears the 4-carboxyglutamate mark. The SCP domain occupies 62 to 184 (VRMHNVIRAT…GEDRYFVCNY (123 aa)).

This sequence belongs to the CRISP family. Post-translationally, contains 11 disulfide bonds. In terms of tissue distribution, expressed by the venom duct.

It is found in the secreted. Its function is as follows. Has no proteolytic activity. The polypeptide is Cysteine-rich venom protein Mr30 (Conus marmoreus (Marble cone)).